The primary structure comprises 238 residues: Sugar fermentation stimulation protein homolog (238 aa).

This sequence belongs to the SfsA family.

In Haemophilus influenzae (strain PittGG), this protein is Sugar fermentation stimulation protein homolog.